Reading from the N-terminus, the 466-residue chain is Methylenetetrahydrofolate--tRNA-(uracil-5-)-methyltransferase TrmFO (466 aa).

An FAD-binding site is contributed by 14–19 (GGGLAG).

It belongs to the MnmG family. TrmFO subfamily. FAD serves as cofactor.

The protein resides in the cytoplasm. The enzyme catalyses uridine(54) in tRNA + (6R)-5,10-methylene-5,6,7,8-tetrahydrofolate + NADH + H(+) = 5-methyluridine(54) in tRNA + (6S)-5,6,7,8-tetrahydrofolate + NAD(+). It carries out the reaction uridine(54) in tRNA + (6R)-5,10-methylene-5,6,7,8-tetrahydrofolate + NADPH + H(+) = 5-methyluridine(54) in tRNA + (6S)-5,6,7,8-tetrahydrofolate + NADP(+). Its function is as follows. Catalyzes the folate-dependent formation of 5-methyl-uridine at position 54 (M-5-U54) in all tRNAs. In Brucella suis (strain ATCC 23445 / NCTC 10510), this protein is Methylenetetrahydrofolate--tRNA-(uracil-5-)-methyltransferase TrmFO.